A 244-amino-acid chain; its full sequence is tRNA (guanine-N(1)-)-methyltransferase (244 aa).

S-adenosyl-L-methionine is bound by residues Gly111 and 130 to 135 (IGDYVL).

The protein belongs to the RNA methyltransferase TrmD family. Homodimer.

Its subcellular location is the cytoplasm. The enzyme catalyses guanosine(37) in tRNA + S-adenosyl-L-methionine = N(1)-methylguanosine(37) in tRNA + S-adenosyl-L-homocysteine + H(+). Specifically methylates guanosine-37 in various tRNAs. This Phytoplasma australiense protein is tRNA (guanine-N(1)-)-methyltransferase.